Here is a 364-residue protein sequence, read N- to C-terminus: UDP-N-acetylglucosamine--N-acetylmuramyl-(pentapeptide) pyrophosphoryl-undecaprenol N-acetylglucosamine transferase (364 aa).

UDP-N-acetyl-alpha-D-glucosamine-binding positions include 13 to 15, Asn125, Arg165, Ser192, and Gln293; that span reads TGG.

This sequence belongs to the glycosyltransferase 28 family. MurG subfamily.

It localises to the cell inner membrane. The enzyme catalyses di-trans,octa-cis-undecaprenyl diphospho-N-acetyl-alpha-D-muramoyl-L-alanyl-D-glutamyl-meso-2,6-diaminopimeloyl-D-alanyl-D-alanine + UDP-N-acetyl-alpha-D-glucosamine = di-trans,octa-cis-undecaprenyl diphospho-[N-acetyl-alpha-D-glucosaminyl-(1-&gt;4)]-N-acetyl-alpha-D-muramoyl-L-alanyl-D-glutamyl-meso-2,6-diaminopimeloyl-D-alanyl-D-alanine + UDP + H(+). The protein operates within cell wall biogenesis; peptidoglycan biosynthesis. Its function is as follows. Cell wall formation. Catalyzes the transfer of a GlcNAc subunit on undecaprenyl-pyrophosphoryl-MurNAc-pentapeptide (lipid intermediate I) to form undecaprenyl-pyrophosphoryl-MurNAc-(pentapeptide)GlcNAc (lipid intermediate II). The chain is UDP-N-acetylglucosamine--N-acetylmuramyl-(pentapeptide) pyrophosphoryl-undecaprenol N-acetylglucosamine transferase from Cereibacter sphaeroides (strain ATCC 17029 / ATH 2.4.9) (Rhodobacter sphaeroides).